The sequence spans 1181 residues: HEAT repeat-containing protein 6 (1181 aa).

The stretch at 159 to 198 (LELLGETGLLMKLSDLAQSDPEVRRAAVHCMANLCLSVPG) is one HEAT 1 repeat. 2 disordered regions span residues 294–347 (DGRT…PVTG) and 371–407 (LDGS…AEGG). The span at 300-312 (KPQQSESSASRPT) shows a compositional bias: polar residues. A compositionally biased stretch (basic residues) spans 313 to 325 (LNKKKKSKVKPKK). Serine 336, serine 337, serine 399, and serine 402 each carry phosphoserine. Low complexity predominate over residues 383–399 (SSPFSSSSWKRVSSSES). HEAT repeat units lie at residues 452-490 (ELGS…GSKQ), 514-552 (SSIR…DAPY), and 558-595 (SLLT…THAP). The disordered stretch occupies residues 613–648 (NSNSATPHLSPPDWWKKAPAGPSLEETSVSSPKGSS). Threonine 618 carries the post-translational modification Phosphothreonine. The segment covering 637 to 646 (EETSVSSPKG) has biased composition (polar residues). Residue serine 643 is modified to Phosphoserine.

The sequence is that of HEAT repeat-containing protein 6 (HEATR6) from Pongo abelii (Sumatran orangutan).